The sequence spans 72 residues: Protein LITTLE ZIPPER 4 (72 aa).

A coiled-coil region spans residues 14 to 44; it reads YIIKENERLRKKAQILNQENQQLLFELKQKL. The tract at residues 42–72 is disordered; sequence QKLSKTKNSSGSNQGNNNNNNNLSSSSSASG. A compositionally biased stretch (low complexity) spans 49 to 72; sequence NSSGSNQGNNNNNNNLSSSSSASG.

Interacts with REV.

Its function is as follows. Competitive inhibitor of the HD-ZIPIII transcription factors in shoot apical meristem (SAM) development. Acts by forming non-functional heterodimers. Part of a negative feedback loop. Essential for proper functioning of stem cells in the SAM. The chain is Protein LITTLE ZIPPER 4 from Arabidopsis thaliana (Mouse-ear cress).